We begin with the raw amino-acid sequence, 127 residues long: Protein ApaG (127 aa).

Positions 2 to 127 (SELVEHIQVH…FRLAGPNQVH (126 aa)) constitute an ApaG domain.

The protein is Protein ApaG of Chromohalobacter salexigens (strain ATCC BAA-138 / DSM 3043 / CIP 106854 / NCIMB 13768 / 1H11).